A 344-amino-acid polypeptide reads, in one-letter code: Protein PopA1 (344 aa).

Disordered regions lie at residues 1-28 (MSVG…NSQQ), 58-108 (SAGG…DANN), 134-156 (QPGG…AGGQ), 211-242 (GNGV…EDQG), and 268-311 (GGGN…NLQS). 2 stretches are compositionally biased toward low complexity: residues 8 to 28 (SPSN…NSQQ) and 65 to 83 (NTGN…ANDP). Residues 89 to 108 (SKSQGPQSANKTGNVDDANN) show a composition bias toward polar residues. The span at 138–156 (NDKGNGVGGANGAKGAGGQ) shows a compositional bias: gly residues. The span at 215–235 (NGNQANGPQNAGDVNGANGAD) shows a compositional bias: low complexity. Positions 268 to 279 (GGGNQAQGGSKG) are enriched in gly residues. Over residues 280–294 (AGNASPASGANPGAN) the composition is skewed to low complexity. The span at 295–311 (QPGSADDQSSGQNNLQS) shows a compositional bias: polar residues.

PopA2 and PopA3 are produced from PopA1.

Its subcellular location is the secreted. Functionally, acts as a specific hypersensitive response (HR) elicitor. Has activity on tobacco (non-host plant) and petunia but is without activity on tomato (host plant); PopA3 seems to be more active than a PopA1-PopA2 mixture. The protein is Protein PopA1 (popA) of Ralstonia nicotianae (strain ATCC BAA-1114 / GMI1000) (Ralstonia solanacearum).